A 1176-amino-acid chain; its full sequence is Carbamoyl phosphate synthase arginine-specific large chain (1176 aa).

The transit peptide at 1–11 (MLRSISIASRA) directs the protein to the mitochondrion. The interval 70–465 (SRSPDVKKVL…SLQKAIRQVD (396 aa)) is carboxyphosphate synthetic domain. R197, R237, G243, G244, K273, L275, E280, G306, T307, H308, Q348, and E362 together coordinate ATP. Positions 201–391 (VQALNEIDIP…LAYTAAKIAL (191 aa)) constitute an ATP-grasp 1 domain. Mg(2+) contacts are provided by Q348, E362, and N364. 3 residues coordinate Mn(2+): Q348, E362, and N364. Residues 466 to 610 (PNFAGFEAYW…YTSYNATTHD (145 aa)) are oligomerization domain. The tract at residues 611–997 (VKFDNGTMVL…AYWAALLSVN (387 aa)) is carbamoyl phosphate synthetic domain. Positions 734–931 (SSILDSIGVD…FIDTASAAIM (198 aa)) constitute an ATP-grasp 2 domain. Positions 770, 809, 811, 816, 841, 842, 843, 844, 884, and 902 each coordinate ATP. 3 residues coordinate Mg(2+): Q884, E902, and N904. 3 residues coordinate Mn(2+): Q884, E902, and N904. The segment at 998-1137 (GMKLPKANSG…NPIPYSEGFK (140 aa)) is allosteric domain. The MGS-like domain occupies 999 to 1154 (MKLPKANSGI…RDFVGEAATT (156 aa)).

Belongs to the CarB family. In terms of assembly, heterodimer composed of 2 chains; the small (or glutamine) chain promotes the hydrolysis of glutamine to ammonia, which is used by the large (or ammonia) chain to synthesize carbamoyl phosphate. Mg(2+) serves as cofactor. Requires Mn(2+) as cofactor.

The protein resides in the mitochondrion. The catalysed reaction is hydrogencarbonate + L-glutamine + 2 ATP + H2O = carbamoyl phosphate + L-glutamate + 2 ADP + phosphate + 2 H(+). It catalyses the reaction hydrogencarbonate + NH4(+) + 2 ATP = carbamoyl phosphate + 2 ADP + phosphate + 2 H(+). Its pathway is amino-acid biosynthesis; L-arginine biosynthesis; carbamoyl phosphate from bicarbonate: step 1/1. Large subunit of the arginine-specific carbamoyl phosphate synthase (CPSase). CPSase catalyzes the formation of carbamoyl phosphate from the ammonia moiety of glutamine, hydrogencarbonate, and phosphate donated by ATP, constituting the first step of 2 biosynthetic pathways, one leading to arginine and/or urea and the other to pyrimidine nucleotides. The large subunit (synthetase) binds the substrates ammonia (free or transferred from glutamine from the small subunit), hydrogencarbonate and ATP and carries out an ATP-coupled ligase reaction, activating hydrogencarbonate by forming carboxy phosphate which reacts with ammonia to form carbamoyl phosphate. The polypeptide is Carbamoyl phosphate synthase arginine-specific large chain (argA) (Cutaneotrichosporon cutaneum (Yeast)).